A 224-amino-acid chain; its full sequence is Urease accessory protein UreF (224 aa).

Belongs to the UreF family. UreD, UreF and UreG form a complex that acts as a GTP-hydrolysis-dependent molecular chaperone, activating the urease apoprotein by helping to assemble the nickel containing metallocenter of UreC. The UreE protein probably delivers the nickel.

It is found in the cytoplasm. Functionally, required for maturation of urease via the functional incorporation of the urease nickel metallocenter. The protein is Urease accessory protein UreF of Klebsiella pneumoniae subsp. pneumoniae (strain ATCC 700721 / MGH 78578).